The following is a 549-amino-acid chain: Cation/acetate symporter ActP (549 aa).

13 consecutive transmembrane segments (helical) span residues 32–54 (IQAI…WASK), 75–97 (GMAI…LVYT), 102–124 (GLIY…AERL), 145–167 (IRIL…QMVG), 182–204 (VAVV…LATT), 211–233 (AILL…NFNF), 263–285 (ALSL…MRFF), 298–320 (FYAT…GAIL), 361–383 (AVAF…SAVS), 404–423 (VSKI…GILF), 428–450 (IAFM…ILLS), 462–484 (LVGG…TIWV), and 494–516 (YPYE…LFSI).

The protein belongs to the sodium:solute symporter (SSF) (TC 2.A.21) family.

Its subcellular location is the cell inner membrane. Transports acetate. This Photorhabdus laumondii subsp. laumondii (strain DSM 15139 / CIP 105565 / TT01) (Photorhabdus luminescens subsp. laumondii) protein is Cation/acetate symporter ActP.